The sequence spans 349 residues: MTATTATAPTMRGGGRNELPPHLDDNLLTPRFYTTEFDKAAKTDLDIARKDFEAMFKEMEADYNLKHFDRKASLERLSELSPEDKAIYESYLVRSVVSEFSGFLLFKEISNRFKKAGRQELGQFFTFLARDEARHAGFLGRALKAEGINVDLPNLGNKRAATFFPLSWVLYSLYLSEKIGYWRYILINRHLNDNPEKVCAPLFDFFEPWCQDENRHGDCINLMMRCWPGMTKGFRGKLLSRFFLWSVFLTHTLTVCERGDFYGLLGIDPVLFDEEVIIQTNNTSRNAFPWVYNFDDGKFLEMRVQILKAFRNWRESSGLAKPVALSKFVSLILRQFALPMQKTNAVRYG.

The span at 1–10 (MTATTATAPT) shows a compositional bias: low complexity. A disordered region spans residues 1 to 23 (MTATTATAPTMRGGGRNELPPHL).

This sequence belongs to the AcsF family. It depends on Fe cation as a cofactor.

It carries out the reaction Mg-protoporphyrin IX 13-monomethyl ester + 3 NADPH + 3 O2 + 2 H(+) = 3,8-divinyl protochlorophyllide a + 3 NADP(+) + 5 H2O. The protein operates within porphyrin-containing compound metabolism; chlorophyll biosynthesis (light-independent). Catalyzes the formation of the isocyclic ring in chlorophyll biosynthesis. Mediates the cyclase reaction, which results in the formation of divinylprotochlorophyllide (Pchlide) characteristic of all chlorophylls from magnesium-protoporphyrin IX 13-monomethyl ester (MgPMME). The sequence is that of Magnesium-protoporphyrin IX monomethyl ester [oxidative] cyclase from Prochlorococcus marinus (strain MIT 9313).